The chain runs to 115 residues: Transmembrane protein 218 (115 aa).

The next 3 helical transmembrane spans lie at V5–L25, F38–P58, and Y81–H101.

The protein belongs to the TMEM218 family. Interacts with TMEM67.

The protein resides in the membrane. It localises to the cell projection. Its subcellular location is the cilium. In terms of biological role, may be involved in ciliary biogenesis or function. The chain is Transmembrane protein 218 (Tmem218) from Mus musculus (Mouse).